An 88-amino-acid chain; its full sequence is Conotoxin Gm9.1 (88 aa).

Residues 1 to 27 (MHLSLARSAVLMLLLLFALGNFVVVQS) form the signal peptide. Residues 28–58 (GLITRDVDNGQLTDNRRNLQTEWNPLSLFMS) constitute a propeptide that is removed on maturation. Cystine bridges form between C62–C76, C66–C78, and C72–C83. At N87 the chain carries Asparagine amide.

The protein belongs to the conotoxin P superfamily. In terms of tissue distribution, expressed by the venom duct.

Its subcellular location is the secreted. Functionally, neurotoxin. In vivo, elicits 'spasmodic' symptomatology. The chain is Conotoxin Gm9.1 from Conus gloriamaris (Glory-of-the-Sea cone).